Here is a 209-residue protein sequence, read N- to C-terminus: uncharacterized protein (209 aa).

A disordered region spans residues 177–209 (DNSDNSSDSDDSDSLDGSDDLNDSDNVDNLFVG). Over residues 183–202 (SDSDDSDSLDGSDDLNDSDN) the composition is skewed to acidic residues.

This is an uncharacterized protein from Acanthamoeba polyphaga (Amoeba).